The primary structure comprises 41 residues: MTNFTTYLSTAPVVALIWFTFTAGLLIEINRFFPDPLVFSF.

The chain crosses the membrane as a helical span at residues 7 to 27 (YLSTAPVVALIWFTFTAGLLI).

It belongs to the PsaJ family.

The protein resides in the plastid. Its subcellular location is the chloroplast thylakoid membrane. In terms of biological role, may help in the organization of the PsaE and PsaF subunits. The sequence is that of Photosystem I reaction center subunit IX from Pleurastrum terricola (Filamentous green alga).